A 1755-amino-acid chain; its full sequence is Deleted in lung and esophageal cancer protein 1 (1755 aa).

Residues 1–12 show a composition bias toward basic residues; sequence METRSSKTRRSL. Disordered stretches follow at residues 1–39, 1339–1360, and 1529–1553; these read METRSSKTRRSLASRTNECQGTMWAPTSPPAGSSSPSQP, PGPSSSSEFSHETDSSVEGSSS, and SQDGASQDHRAPGPGQKQECEEETA. Over residues 30-39 the composition is skewed to low complexity; the sequence is PAGSSSPSQP.

Interacts with alpha- and beta-tubulin. Interacts with BBS2, BBS4, BBS5, MKKS, TCP1, CCT2, CCT3, CCT4, CCT5 and CCT7. Expressed in all tissues examined. Expression is highest in prostate and testis.

It localises to the cytoplasm. In terms of biological role, essential for spermatogenesis and male fertility. May play an important role in sperm head and tail formation. May act as a tumor suppressor by inhibiting cell proliferation. The protein is Deleted in lung and esophageal cancer protein 1 of Homo sapiens (Human).